A 241-amino-acid chain; its full sequence is Triosephosphate isomerase (241 aa).

A substrate-binding site is contributed by 9–11; sequence NWK. H96 acts as the Electrophile in catalysis. E165 functions as the Proton acceptor in the catalytic mechanism. Substrate contacts are provided by residues G171, S204, and 225 to 226; that span reads GG.

The protein belongs to the triosephosphate isomerase family. As to quaternary structure, homodimer.

It localises to the cytoplasm. The enzyme catalyses D-glyceraldehyde 3-phosphate = dihydroxyacetone phosphate. The protein operates within carbohydrate biosynthesis; gluconeogenesis. It participates in carbohydrate degradation; glycolysis; D-glyceraldehyde 3-phosphate from glycerone phosphate: step 1/1. Functionally, involved in the gluconeogenesis. Catalyzes stereospecifically the conversion of dihydroxyacetone phosphate (DHAP) to D-glyceraldehyde-3-phosphate (G3P). The protein is Triosephosphate isomerase of Nostoc sp. (strain PCC 7120 / SAG 25.82 / UTEX 2576).